The following is a 208-amino-acid chain: Small ribosomal subunit protein uS2 (208 aa).

Residues 189-208 (KPDQDLPVPPEEFETRLVQT) form a disordered region.

It belongs to the universal ribosomal protein uS2 family.

The chain is Small ribosomal subunit protein uS2 from Pyrobaculum arsenaticum (strain DSM 13514 / JCM 11321 / PZ6).